A 340-amino-acid chain; its full sequence is Eukaryotic translation initiation factor 3 subunit I (340 aa).

WD repeat units lie at residues 8-47 (GHER…RLGT), 50-91 (GHQG…KVWD), 150-189 (CTES…QLEN), 194-233 (EFDH…ILKT), and 291-330 (GHFG…FDFM).

It belongs to the eIF-3 subunit I family. Component of the eukaryotic translation initiation factor 3 (eIF-3) complex.

It is found in the cytoplasm. Its function is as follows. Component of the eukaryotic translation initiation factor 3 (eIF-3) complex, which is involved in protein synthesis of a specialized repertoire of mRNAs and, together with other initiation factors, stimulates binding of mRNA and methionyl-tRNAi to the 40S ribosome. The eIF-3 complex specifically targets and initiates translation of a subset of mRNAs involved in cell proliferation. The protein is Eukaryotic translation initiation factor 3 subunit I (tif34) of Aspergillus fumigatus (strain CBS 144.89 / FGSC A1163 / CEA10) (Neosartorya fumigata).